Here is a 308-residue protein sequence, read N- to C-terminus: UDP-N-acetylenolpyruvoylglucosamine reductase (308 aa).

Residues 22–185 enclose the FAD-binding PCMH-type domain; that stretch reads RVGGPADWLF…TEATFRAEAG (164 aa). The active site involves arginine 165. Residues 197-211 are compositionally biased toward basic and acidic residues; that stretch reads QIARRDSSQPTKERS. The interval 197-228 is disordered; it reads QIARRDSSQPTKERSAGSTFRNPAGFSSTGRA. A compositionally biased stretch (polar residues) spans 212–226; the sequence is AGSTFRNPAGFSSTG. The active-site Proton donor is serine 214. The active site involves glutamate 296.

It belongs to the MurB family. The cofactor is FAD.

Its subcellular location is the cytoplasm. The catalysed reaction is UDP-N-acetyl-alpha-D-muramate + NADP(+) = UDP-N-acetyl-3-O-(1-carboxyvinyl)-alpha-D-glucosamine + NADPH + H(+). It functions in the pathway cell wall biogenesis; peptidoglycan biosynthesis. Functionally, cell wall formation. The sequence is that of UDP-N-acetylenolpyruvoylglucosamine reductase from Cereibacter sphaeroides (strain ATCC 17029 / ATH 2.4.9) (Rhodobacter sphaeroides).